Consider the following 1374-residue polypeptide: MFMSVVNFCGQLSNTQQFDQIRINIASPDQVRSWSFGEVTKPETINYRTFKPEKDGLFCARIFGPVKDYECLCGKYKRMKNRGITCEKCGVEVTVSRVRRERMGHIELAAPVAHIWFLKSLPSRISTLLDMTMRDIEKILYFENYVVVDPGLSILQKGELLTEEELQKAKDKYGEDAFTASIGAEVIQQMLKELDFSKLKQELYEELQTTSSEVKKKKLVKRLKLVEDFLESENKPEWMIMDVLPVIPPEIRPLVMLDGGRFATSDLNELYRRVINRNNRLKKLIESKAPDIIVRNEKRMLQEAVDALFDNGRRGRAAKNANKRPFKSLSDMLKGKQGRFRQNLLGKRVDYSGRSVIVVGPELKLHQCGLPKKMALELFKPFIYSKLELYGIATTIKAAKKMVEAEKSEVWDVLEEVIREHPVLLNRAPTLHRLGIQAFEPLLIEGKAIQLHPLVCTAFNADFDGDQMAVHIPLSIEAQLEARVFMMSTNNILSPANGRPIIVPDKDIVLGLYYLTLAFDNEVGAGMMFSDLAEMEHALYNKFITIHTKIKYRRNQLNAEGKMVPVIIDTTYGRLMVGELLPSNPNIEFKFINKQLTKKDISLVIDLVYRHCGQKATVIFADQLMKLGFKYACSSGISFGMDDMVVPESKSTHINETQLEIQEFEQQYSNGLITYGEKYNKVVDAWSRCTDRVANDMMKEIATPPVNDDPNHQRINAIYMMAISGARGSFQQIKQLGGMRGLMTKSNGQIIQTPIISNFKEGLTEFECFNSANGMRKGQIDTALKTASSGYLTRKLVDVAQDCIITEKDCGTDKGIEVKSVIEGGEVIVPLAEKILGRTAAIDIFHPVTNDLILNKGELISEAKLEQIESAGLDRIMIKSVLTCESTTGICSICYGRDLATGTLVSEGEAIGVIAAQSIGEPGTQLTMRTFHIGGAATKGAEVSSVDASYDAKVKIISRNVVINSEERKIVMSRNCELLLLDNNGNEKARHKIPYGARLLVDDGDMVIKTQKLAEWDPYTIPIITEKSGKVLFKDMVEGITIRDVTDEATGIPSKVIIESKQYSRGAELRPRIQLLGAKGEVITLSNGLEARYYLPVGAVLSVEDGVQISVGDIIARIPKESTTTKDITGGLPRVAELVEARRPKDHAVIAEIDGRVEFGKDYKSKRRIIIHPIDETMSIEYMVPKGKHVVVNEGDFVKKGDLLIDGNPVLQDILKVMGVEVLANYIVKEVQAVYRLQGVKIDDKHIEVIIRQMLQKVEVTDSGGTTLLAGEKIDRHEFDEINAKAMKNGLKPAEAQLILQGITKASLQTRSFISAASFQETTRVLTEAAIAGKVDKLRGLKENVIVGRLVPAGTGYFMDKMRKAAIKLDEENV.

Zn(2+) is bound by residues Cys71, Cys73, Cys86, and Cys89. Residues Asp462, Asp464, and Asp466 each contribute to the Mg(2+) site. The Zn(2+) site is built by Cys810, Cys884, Cys891, and Cys894.

This sequence belongs to the RNA polymerase beta' chain family. In terms of assembly, the RNAP catalytic core consists of 2 alpha, 1 beta, 1 beta' and 1 omega subunit. When a sigma factor is associated with the core the holoenzyme is formed, which can initiate transcription. Requires Mg(2+) as cofactor. Zn(2+) serves as cofactor.

The catalysed reaction is RNA(n) + a ribonucleoside 5'-triphosphate = RNA(n+1) + diphosphate. DNA-dependent RNA polymerase catalyzes the transcription of DNA into RNA using the four ribonucleoside triphosphates as substrates. The protein is DNA-directed RNA polymerase subunit beta' of Rickettsia massiliae (strain Mtu5).